We begin with the raw amino-acid sequence, 52 residues long: uncharacterized protein (52 aa).

This is an uncharacterized protein from Homo sapiens (Human).